We begin with the raw amino-acid sequence, 411 residues long: Arginine deiminase (411 aa).

Catalysis depends on Cys401, which acts as the Amidino-cysteine intermediate.

Belongs to the arginine deiminase family.

The protein localises to the cytoplasm. The catalysed reaction is L-arginine + H2O = L-citrulline + NH4(+). The protein operates within amino-acid degradation; L-arginine degradation via ADI pathway; carbamoyl phosphate from L-arginine: step 1/2. In Streptococcus equi subsp. equi (strain 4047), this protein is Arginine deiminase.